A 461-amino-acid polypeptide reads, in one-letter code: Peptidyl-prolyl cis-trans isomerase-like 4 (461 aa).

Residues 1 to 171 (MSVLLETSLG…KDIRIRHTVI (171 aa)) enclose the PPIase cyclophilin-type domain. An RRM domain is found at 248-326 (NVLFVCKLNP…HRIHVDFSQS (79 aa)). Positions 372–461 (NYNMVFDKND…DDRYRDRRRR (90 aa)) are disordered. Basic and acidic residues-rich tracts occupy residues 378-392 (DKND…ERSY) and 400-461 (NYRD…RRRR).

This sequence belongs to the cyclophilin-type PPIase family. PPIL4 subfamily.

Its subcellular location is the nucleus. It catalyses the reaction [protein]-peptidylproline (omega=180) = [protein]-peptidylproline (omega=0). In terms of biological role, PPIases accelerate the folding of proteins. It catalyzes the cis-trans isomerization of proline imidic peptide bonds in oligopeptides. In Emericella nidulans (strain FGSC A4 / ATCC 38163 / CBS 112.46 / NRRL 194 / M139) (Aspergillus nidulans), this protein is Peptidyl-prolyl cis-trans isomerase-like 4 (cyp6).